The following is a 283-amino-acid chain: Mitochondrial intermembrane space import and assembly protein 40 (283 aa).

Residues 1–35 constitute a mitochondrion transit peptide; it reads MFRPASRALLRAPTPAVGVARGPTRRFISSSTGST. At 36–46 the chain is on the mitochondrial matrix side; it reads KPRSWKNTFIR. A helical; Signal-anchor for type II membrane protein membrane pass occupies residues 47–64; sequence VGLASGAVYYYNTSSVFA. At 65 to 283 the chain is on the mitochondrial intermembrane side; it reads ETPSLSFRPE…EKTPEQQTEK (219 aa). The interval 72 to 136 is disordered; that stretch reads RPEAQPKHED…SAEELEAEAD (65 aa). Residues 91-101 are compositionally biased toward basic and acidic residues; sequence IKPKSREEKKA. Residues 102-119 show a composition bias toward low complexity; that stretch reads PAAAADAAATPASTGANA. 3 cysteine pairs are disulfide-bonded: Cys-152/Cys-154, Cys-163/Cys-196, and Cys-173/Cys-186. The CHCH domain occupies 160 to 204; the sequence is YGPCGEEFRAAFSCFVYSEEEPKGMDCIDKFKAMQDCFRAHPDVY. 2 consecutive short sequence motifs (cx9C motif) follow at residues 163–173 and 186–196; these read CGEEFRAAFSC and CIDKFKAMQDC. The tract at residues 211–283 is disordered; the sequence is DEEAGAEANA…EKTPEQQTEK (73 aa). Basic and acidic residues-rich tracts occupy residues 237–251 and 272–283; these read VEKH…DEVK and EQEKTPEQQTEK.

In terms of assembly, monomer. Cu(2+) serves as cofactor. Zn(2+) is required as a cofactor.

It is found in the mitochondrion inner membrane. Its function is as follows. Required for the import and folding of small cysteine-containing proteins (small Tim) in the mitochondrial intermembrane space (IMS). Forms a redox cycle with ERV1 that involves a disulfide relay system. Precursor proteins to be imported into the IMS are translocated in their reduced form into the mitochondria. The oxidized form of MIA40 forms a transient intermolecular disulfide bridge with the reduced precursor protein, resulting in oxidation of the precursor protein that now contains an intramolecular disulfide bond and is able to undergo folding in the IMS. The polypeptide is Mitochondrial intermembrane space import and assembly protein 40 (mia40) (Emericella nidulans (strain FGSC A4 / ATCC 38163 / CBS 112.46 / NRRL 194 / M139) (Aspergillus nidulans)).